A 185-amino-acid polypeptide reads, in one-letter code: Ribosome-recycling factor (185 aa).

Belongs to the RRF family.

The protein resides in the cytoplasm. Responsible for the release of ribosomes from messenger RNA at the termination of protein biosynthesis. May increase the efficiency of translation by recycling ribosomes from one round of translation to another. The chain is Ribosome-recycling factor from Thermosipho africanus (strain TCF52B).